We begin with the raw amino-acid sequence, 405 residues long: Glucose-1-phosphate adenylyltransferase (405 aa).

Residues Y96, G161, 176–177 (EK), and S194 contribute to the alpha-D-glucose 1-phosphate site.

It belongs to the bacterial/plant glucose-1-phosphate adenylyltransferase family. In terms of assembly, homotetramer.

It carries out the reaction alpha-D-glucose 1-phosphate + ATP + H(+) = ADP-alpha-D-glucose + diphosphate. Its pathway is glycan biosynthesis; glycogen biosynthesis. Functionally, involved in the biosynthesis of ADP-glucose, a building block required for the elongation reactions to produce glycogen. Catalyzes the reaction between ATP and alpha-D-glucose 1-phosphate (G1P) to produce pyrophosphate and ADP-Glc. The sequence is that of Glucose-1-phosphate adenylyltransferase from Aliivibrio fischeri (strain ATCC 700601 / ES114) (Vibrio fischeri).